A 285-amino-acid chain; its full sequence is ATP synthase gamma chain (285 aa).

The protein belongs to the ATPase gamma chain family. In terms of assembly, F-type ATPases have 2 components, CF(1) - the catalytic core - and CF(0) - the membrane proton channel. CF(1) has five subunits: alpha(3), beta(3), gamma(1), delta(1), epsilon(1). CF(0) has three main subunits: a, b and c.

It localises to the cell membrane. Its function is as follows. Produces ATP from ADP in the presence of a proton gradient across the membrane. The gamma chain is believed to be important in regulating ATPase activity and the flow of protons through the CF(0) complex. In Clostridium novyi (strain NT), this protein is ATP synthase gamma chain.